Consider the following 443-residue polypeptide: Protein king tubby (443 aa).

Disordered regions lie at residues 57 to 85 (TNGS…LSTI) and 98 to 189 (HELE…ESEG). The span at 68 to 85 (AVNTSRNHSNNMRSLSTI) shows a compositional bias: polar residues. A compositionally biased stretch (low complexity) spans 113–128 (QHQQSASHSANSTQSQ). Ser136 carries the phosphoserine modification. The segment covering 148–160 (NRNVAAAAPVRPA) has biased composition (low complexity). The span at 177-186 (NGTGNGTGGE) shows a compositional bias: gly residues.

This sequence belongs to the TUB family.

It localises to the cytoplasm. It is found in the nucleus. Its subcellular location is the cell projection. The protein resides in the cilium membrane. The protein localises to the rhabdomere. This Drosophila yakuba (Fruit fly) protein is Protein king tubby.